The primary structure comprises 225 residues: Insulin-induced gene 2 protein (225 aa).

Residues 1 to 28 (MAEGETESPRPKKRGPYISSVTSQSVNV) are Cytoplasmic-facing. The chain crosses the membrane as a helical span at residues 29–51 (VIRGVVLFFIGVFLALVLNLLQI). Residues 52 to 70 (QRNVTLFPPDVITSIFSSA) are Lumenal-facing. Residues 71 to 88 (WWVPPCCGTASAVIGLLY) form a helical membrane-spanning segment. At 89–103 (PCIDRHLGEPHKFKR) the chain is on the cytoplasmic side. A helical transmembrane segment spans residues 104-126 (EWSSVMRCVAVFVGINHASAKVD). Topologically, residues 127 to 129 (FDN) are lumenal. The helical transmembrane segment at 130–148 (NFQFSLTLAALSVGLWWTF) threads the bilayer. The Cytoplasmic segment spans residues 149-153 (DRSRS). Ser151 is subject to Phosphoserine. Residues 154 to 175 (GFGLGVGIAFLATVVTQLLVYN) form a helical membrane-spanning segment. Residues 176–189 (GVYQYTSPDFLYVR) lie on the Lumenal side of the membrane. A helical membrane pass occupies residues 190-207 (SWLPCIFFAGGITMGNIG). The Cytoplasmic segment spans residues 208 to 225 (RQLAMYECKVIAEKSHQE). Cys215 is subject to Cysteine sulfenic acid (-SOH); alternate. Cys215 is covalently cross-linked (Glycyl cysteine thioester (Cys-Gly) (interchain with G-Cter in ubiquitin); alternate). The short motif at 219 to 225 (AEKSHQE) is the KxHxx element.

It belongs to the INSIG family. In terms of assembly, interacts with SCAP; interaction is direct and only takes place in the presence of sterols; it prevents interaction between SCAP and the coat protein complex II (COPII). Associates with the SCAP-SREBP complex (composed of SCAP and SREBF1/SREBP1 or SREBF2/SREBP2); association is mediated via its interaction with SCAP and only takes place in the presence of sterols. Interacts with RNF139. Interacts with RNF145. Phosphorylation at Ser-151 by PCK1 reduces binding to oxysterol, disrupting the interaction between INSIG2 and SCAP, thereby promoting nuclear translocation of SREBP proteins (SREBF1/SREBP1 or SREBF2/SREBP2) and subsequent transcription of downstream lipogenesis-related genes. In terms of processing, polyubiquitinated by AMFR/gp78 at Cys-215 in some tissues such as adipose tissues, undifferentiated myoblasts and liver, leading to its degradation. In differentiated myotubes, Cys-215 oxidation prevents ubiquitination at the same site, resulting in protein stabilization. Post-translationally, oxidized at Cys-215 in differentiated myotubes, preventing ubiquitination at the same site, and resulting in protein stabilization.

It localises to the endoplasmic reticulum membrane. Its function is as follows. Oxysterol-binding protein that mediates feedback control of cholesterol synthesis by controlling both endoplasmic reticulum to Golgi transport of SCAP and degradation of HMGCR. Acts as a negative regulator of cholesterol biosynthesis by mediating the retention of the SCAP-SREBP complex in the endoplasmic reticulum, thereby blocking the processing of sterol regulatory element-binding proteins (SREBPs) SREBF1/SREBP1 and SREBF2/SREBP2. Binds oxysterol, including 22-hydroxycholesterol, 24-hydroxycholesterol, 25-hydroxycholesterol and 27-hydroxycholesterol, regulating interaction with SCAP and retention of the SCAP-SREBP complex in the endoplasmic reticulum. In presence of oxysterol, interacts with SCAP, retaining the SCAP-SREBP complex in the endoplasmic reticulum, thereby preventing SCAP from escorting SREBF1/SREBP1 and SREBF2/SREBP2 to the Golgi. Sterol deprivation or phosphorylation by PCK1 reduce oxysterol-binding, disrupting the interaction between INSIG2 and SCAP, thereby promoting Golgi transport of the SCAP-SREBP complex, followed by processing and nuclear translocation of SREBF1/SREBP1 and SREBF2/SREBP2. Also regulates cholesterol synthesis by regulating degradation of HMGCR: initiates the sterol-mediated ubiquitin-mediated endoplasmic reticulum-associated degradation (ERAD) of HMGCR via recruitment of the reductase to the ubiquitin ligase RNF139. In Rattus norvegicus (Rat), this protein is Insulin-induced gene 2 protein.